A 434-amino-acid polypeptide reads, in one-letter code: Tol-Pal system protein TolB (434 aa).

The signal sequence occupies residues 1-21 (MIVRRALALAALALAASPALA). The tract at residues 411 to 434 (GDRQTPVTSGKTDLAAPAWGPLAP) is disordered.

The protein belongs to the TolB family. The Tol-Pal system is composed of five core proteins: the inner membrane proteins TolA, TolQ and TolR, the periplasmic protein TolB and the outer membrane protein Pal. They form a network linking the inner and outer membranes and the peptidoglycan layer.

The protein localises to the periplasm. In terms of biological role, part of the Tol-Pal system, which plays a role in outer membrane invagination during cell division and is important for maintaining outer membrane integrity. The polypeptide is Tol-Pal system protein TolB (Anaeromyxobacter dehalogenans (strain 2CP-C)).